A 426-amino-acid polypeptide reads, in one-letter code: Dihydroorotase (426 aa).

The Zn(2+) site is built by H55 and H57. Substrate-binding positions include 57–59 and N89; that span reads HLR. Residues D147, H174, H233, and D306 each coordinate Zn(2+). Residue D306 is part of the active site. Substrate is bound by residues H310 and 324 to 325; that span reads FG.

It belongs to the metallo-dependent hydrolases superfamily. DHOase family. Class I DHOase subfamily. Zn(2+) is required as a cofactor.

The catalysed reaction is (S)-dihydroorotate + H2O = N-carbamoyl-L-aspartate + H(+). It participates in pyrimidine metabolism; UMP biosynthesis via de novo pathway; (S)-dihydroorotate from bicarbonate: step 3/3. Catalyzes the reversible cyclization of carbamoyl aspartate to dihydroorotate. The protein is Dihydroorotase of Thermus aquaticus.